The primary structure comprises 140 residues: Transcription antitermination protein NusB (140 aa).

The protein belongs to the NusB family.

Its function is as follows. Involved in transcription antitermination. Required for transcription of ribosomal RNA (rRNA) genes. Binds specifically to the boxA antiterminator sequence of the ribosomal RNA (rrn) operons. This is Transcription antitermination protein NusB from Thermoanaerobacter pseudethanolicus (strain ATCC 33223 / 39E) (Clostridium thermohydrosulfuricum).